We begin with the raw amino-acid sequence, 57 residues long: Large ribosomal subunit protein bL32 (57 aa).

It belongs to the bacterial ribosomal protein bL32 family.

The sequence is that of Large ribosomal subunit protein bL32 from Streptomyces avermitilis (strain ATCC 31267 / DSM 46492 / JCM 5070 / NBRC 14893 / NCIMB 12804 / NRRL 8165 / MA-4680).